A 336-amino-acid polypeptide reads, in one-letter code: Ribosomal RNA large subunit methyltransferase F (336 aa).

The protein belongs to the methyltransferase superfamily. METTL16/RlmF family.

It localises to the cytoplasm. The enzyme catalyses adenosine(1618) in 23S rRNA + S-adenosyl-L-methionine = N(6)-methyladenosine(1618) in 23S rRNA + S-adenosyl-L-homocysteine + H(+). In terms of biological role, specifically methylates the adenine in position 1618 of 23S rRNA. This Yersinia pestis bv. Antiqua (strain Nepal516) protein is Ribosomal RNA large subunit methyltransferase F.